The following is a 1149-amino-acid chain: Guanine nucleotide exchange factor DBS (1149 aa).

The CRAL-TRIO domain occupies 52–224 (AATASDEIMH…DLGGTLDYCH (173 aa)). The Spectrin repeat unit spans residues 351–456 (LQLRHFEQGF…VTRRRGLLSK (106 aa)). 4 positions are modified to phosphoserine: serine 457, serine 462, serine 471, and serine 480. Positions 503–529 (LETGAENKIQELNEIYKEYECILNQDL) form a coiled coil. The segment at 555–627 (KKLAAKQTRP…RTSSTGEEEE (73 aa)) is disordered. The segment covering 583–594 (PGSWRSSENSSS) has biased composition (low complexity). The span at 607 to 616 (AKSEMSEPRQ) shows a compositional bias: basic and acidic residues. The residue at position 621 (serine 621) is a Phosphoserine. At threonine 622 the chain carries Phosphothreonine. The 181-residue stretch at 632 to 812 (LRRHVMNELL…LGILKAVNDS (181 aa)) folds into the DH domain. Residues 841 to 950 (TDHKKGHTKV…IRKVLTSQLQ (110 aa)) enclose the PH domain. The interval 956–1033 (SQHRALEQSH…EAPEEDGGWS (78 aa)) is disordered. Over residues 966 to 978 (SLPLPTPSSTSPT) the composition is skewed to low complexity. 4 positions are modified to phosphoserine: serine 1033, serine 1034, serine 1041, and serine 1042. The region spanning 1055–1116 (LVPGKYTVVM…PASSLSTLLG (62 aa)) is the SH3 domain.

The protein belongs to the MCF2 family. In terms of assembly, interacts with GTP-bound RAC1. Interacts with CDC42. Interacts with RHOA. Interacts with CCPG1, which results in specific inhibition of its exchange activity toward RHOA, but does not affect its activity on CDC42. In terms of tissue distribution, expressed at low levels in several hemopoietic cell lines and in thymus and spleen, and at higher levels in other tissues, particularly in brain.

It localises to the cytoplasm. Its subcellular location is the cell membrane. In terms of biological role, guanine nucleotide exchange factor that catalyzes guanine nucleotide exchange on RHOA and CDC42, and thereby contributes to the regulation of RHOA and CDC42 signaling pathways. Seems to lack activity with RAC1. Becomes activated and highly tumorigenic by truncation of the N-terminus. In Mus musculus (Mouse), this protein is Guanine nucleotide exchange factor DBS (Mcf2l).